The sequence spans 424 residues: Inositol phosphosphingolipids phospholipase C (424 aa).

E49 serves as a coordination point for Mg(2+). Catalysis depends on H289, which acts as the Proton acceptor. The next 2 helical transmembrane spans lie at 335–357 and 364–386; these read LRIA…IAWC and VIIL…CIGL.

This sequence belongs to the neutral sphingomyelinase family. Mg(2+) is required as a cofactor.

The protein localises to the cell membrane. It localises to the endoplasmic reticulum membrane. It functions in the pathway lipid metabolism; sphingolipid metabolism. Its function is as follows. Inositol phosphosphingolipids phospholipase essential for the coordination of cell wall formation. Responsible for the hydrolysis of the phosphosphingolipids (IPS), inositol phosphorylceramide (IPC), mannosylinositol phosphorylceramide (MIPC), and mannosyldiinositol phosphorylceramide (M(IP)2C). This is Inositol phosphosphingolipids phospholipase C (css1) from Schizosaccharomyces pombe (strain 972 / ATCC 24843) (Fission yeast).